A 453-amino-acid chain; its full sequence is DNA repair protein RadA (453 aa).

A C4-type zinc finger spans residues 10 to 27; the sequence is CTECGATFPKWAGQCADC. 96–103 provides a ligand contact to ATP; it reads GDPGIGKS. Positions 252-256 match the RadA KNRFG motif motif; sequence KNRFG. The tract at residues 351 to 453 is lon-protease-like; it reads DVFLNVVGGV…LEQALDALFE (103 aa).

Belongs to the RecA family. RadA subfamily.

Functionally, DNA-dependent ATPase involved in processing of recombination intermediates, plays a role in repairing DNA breaks. Stimulates the branch migration of RecA-mediated strand transfer reactions, allowing the 3' invading strand to extend heteroduplex DNA faster. Binds ssDNA in the presence of ADP but not other nucleotides, has ATPase activity that is stimulated by ssDNA and various branched DNA structures, but inhibited by SSB. Does not have RecA's homology-searching function. In Pseudomonas aeruginosa (strain ATCC 15692 / DSM 22644 / CIP 104116 / JCM 14847 / LMG 12228 / 1C / PRS 101 / PAO1), this protein is DNA repair protein RadA.